A 177-amino-acid polypeptide reads, in one-letter code: Large ribosomal subunit protein uL6 (177 aa).

Belongs to the universal ribosomal protein uL6 family. Part of the 50S ribosomal subunit.

Functionally, this protein binds to the 23S rRNA, and is important in its secondary structure. It is located near the subunit interface in the base of the L7/L12 stalk, and near the tRNA binding site of the peptidyltransferase center. This chain is Large ribosomal subunit protein uL6, found in Enterobacter sp. (strain 638).